The sequence spans 219 residues: Translation initiation factor IF-3 (219 aa).

Belongs to the IF-3 family. As to quaternary structure, monomer.

Its subcellular location is the cytoplasm. Functionally, IF-3 binds to the 30S ribosomal subunit and shifts the equilibrium between 70S ribosomes and their 50S and 30S subunits in favor of the free subunits, thus enhancing the availability of 30S subunits on which protein synthesis initiation begins. This Prochlorococcus marinus (strain MIT 9303) protein is Translation initiation factor IF-3.